The following is a 448-amino-acid chain: Probable xyloglucan 6-xylosyltransferase 1 (448 aa).

Topologically, residues 1 to 19 are cytoplasmic; sequence MWVAERVVGERRMREIQRF. Residues 20-42 traverse the membrane as a helical; Signal-anchor for type II membrane protein segment; the sequence is ARNAKLTVVCLLLTVVVLRGTVG. Residues 43–448 lie on the Lumenal side of the membrane; it reads AGKFGTPQQD…AFKAMKTTST (406 aa). The segment at 71–113 is disordered; the sequence is HHDALSRGGGSSSSSGRAAQRDDEPDPPPRTLRDPPYTLGPKI. The N-linked (GlcNAc...) asparagine glycan is linked to Asn421.

It belongs to the glycosyltransferase 34 family.

Its subcellular location is the golgi apparatus membrane. The enzyme catalyses Transfers an alpha-D-xylosyl residue from UDP-D-xylose to a glucose residue in xyloglucan, forming an alpha-(1-&gt;6)-D-xylosyl-D-glucose linkage.. In terms of biological role, probable xyloglucan xylosyltransferase involved in the biosynthesis of xyloglucan in roots. In Oryza sativa subsp. indica (Rice), this protein is Probable xyloglucan 6-xylosyltransferase 1.